Consider the following 540-residue polypeptide: MLFCDDSKKYLKEQNINLKNEFDKDDKRVEKFSLKHQNIYFDYSKNLINNYILKSLLESAEKSSLKDKIKQMFNGAKINSTEHRAVLHTALRDLSSTPLIVDGQDIRQEVTKEKQRVKELVEKVVSGRWRGFSGKKITDIVNIGIGGSDLGPKMVVRALQPYHCTDLKVHFVSNVDADSLLQALHVVDPETTLFIIASKSFSTEETLLNSISAREWLLDHYEDEKAVANHFVAISSKLDKVKEFGIDLEHCYKMWDWVGGRYSLWSSIGMSIAFAIGYDNFEKLLAGAYSVDKYFKETEFSKNIPVIMALLASYYSCTYNSQSQALLPYDERLCYFVDYLQQADMESNGKSVNIAGGTVNYQTGVVLWGGVGTNGQHAFHQLLHQGNIFIPVDFIAIATSHHNYDNHQQALLANCFAQSQALMFGQSYDMVYNELLKSGLNETQAKKLAAHKVIPGNRPSTTILLDELSPYSLGALIALYEHKIFVQGVLWDINSYDQWGVELGKKLGKNILKAMNDDSSDEYQNLDDSTRQLIAKVKNK.

The active-site Proton donor is Glu-346. Active-site residues include His-377 and Lys-505.

Belongs to the GPI family.

It localises to the cytoplasm. The enzyme catalyses alpha-D-glucose 6-phosphate = beta-D-fructose 6-phosphate. It functions in the pathway carbohydrate biosynthesis; gluconeogenesis. Its pathway is carbohydrate degradation; glycolysis; D-glyceraldehyde 3-phosphate and glycerone phosphate from D-glucose: step 2/4. Catalyzes the reversible isomerization of glucose-6-phosphate to fructose-6-phosphate. This Francisella tularensis subsp. holarctica (strain FTNF002-00 / FTA) protein is Glucose-6-phosphate isomerase.